Consider the following 514-residue polypeptide: Putative exoglucanase type C (514 aa).

Residues 1 to 17 form the signal peptide; that stretch reads MYRIVATASALIAAARA. The interval 18–439 is catalytic; sequence QQVCSLNTET…RDVPNSKVSF (422 aa). Glu-229 (nucleophile) is an active-site residue. Glu-234 (proton donor) is an active-site residue. Residue Asn-287 is glycosylated (N-linked (GlcNAc...) asparagine). Polar residues predominate over residues 408-424; sequence STKVGSQRGSCATTSGK. 2 disordered regions span residues 408–433 and 448–485; these read STKV…RDVP and GSTY…QWGQ. The linker stretch occupies residues 440 to 482; it reads SNIKFGPIGSTYKSDGTTPNPPASSSTTGSSTPTNPPAGSVDQ. Low complexity predominate over residues 462–479; that stretch reads ASSSTTGSSTPTNPPAGS. In terms of domain architecture, CBM1 spans 478–514; it reads GSVDQWGQCGGQNYSGPTTCKSPFTCKKINDFYSQCQ. Disulfide bonds link Cys-486–Cys-503 and Cys-497–Cys-513. Asn-490 carries an N-linked (GlcNAc...) asparagine glycan.

This sequence belongs to the glycosyl hydrolase 7 (cellulase C) family.

The enzyme catalyses Hydrolysis of (1-&gt;4)-beta-D-glucosidic linkages in cellulose and cellotetraose, releasing cellobiose from the non-reducing ends of the chains.. This is Putative exoglucanase type C from Fusarium oxysporum (Fusarium vascular wilt).